The sequence spans 122 residues: UPF0145 protein Bmul_3577/BMULJ_04940 (122 aa).

This sequence belongs to the UPF0145 family.

The protein is UPF0145 protein Bmul_3577/BMULJ_04940 of Burkholderia multivorans (strain ATCC 17616 / 249).